Reading from the N-terminus, the 115-residue chain is Splicing factor 3B subunit 6-like protein (115 aa).

Residues 9–22 (EVNSILFIKNLSFK) are interaction with pre-mRNA branch site. One can recognise an RRM domain in the interval 12–87 (SILFIKNLSF…RYLVVHYYNP (76 aa)).

It localises to the nucleus. Necessary for the splicing of pre-mRNA. This Schizosaccharomyces pombe (strain 972 / ATCC 24843) (Fission yeast) protein is Splicing factor 3B subunit 6-like protein.